A 766-amino-acid polypeptide reads, in one-letter code: Serine/threonine-protein kinase B-raf (766 aa).

Gly residues predominate over residues 1-13; that stretch reads MAALSGGGGGGAE. Positions 1-38 are disordered; the sequence is MAALSGGGGGGAEPGQALFNGDMEPEAGAGAGAAASSA. N-acetylalanine is present on Ala2. Phosphoserine is present on Ser151. The RBD domain occupies 155–227; sequence PIVRVFLPNK…TGEELHVEVL (73 aa). The Phorbol-ester/DAG-type zinc finger occupies 234–280; that stretch reads THNFVRKTFFTLAFCDFCRKLLFQGFRCQTCGYKFHQRCSTEVPLMC. His235, Cys248, Cys251, Cys261, Cys264, His269, Cys272, and Cys280 together coordinate Zn(2+). Residues 308–454 form a disordered region; it reads AETALTSGSS…DSSDDWEIPD (147 aa). Low complexity predominate over residues 314–341; sequence SGSSPSAPASDSIGPQILTSPSPSKSIP. At Ser333 the chain carries Phosphoserine. Over residues 348 to 363 the composition is skewed to basic and acidic residues; the sequence is PADEDHRNQFGQRDRS. Ser365 carries the post-translational modification Phosphoserine; by SGK1. Thr373 carries the post-translational modification Phosphothreonine; by autocatalysis. Position 396 is a phosphothreonine (Thr396). Ser399 is modified (phosphoserine). A Phosphothreonine modification is found at Thr401. Residues 423–447 are compositionally biased toward basic and acidic residues; sequence QRERKSSSSSEDRNRMKTLGRRDSS. Ser446 and Ser447 each carry phosphoserine. The 261-residue stretch at 457–717 folds into the Protein kinase domain; it reads ITVGQRIGSG…PQILASIELL (261 aa). Residues 463–471 and Lys483 contribute to the ATP site; that span reads IGSGSFGTV. Asp576 serves as the catalytic Proton acceptor. Lys578 is covalently cross-linked (Glycyl lysine isopeptide (Lys-Gly) (interchain with G-Cter in ubiquitin)). Omega-N-methylarginine; by PRMT5 is present on Arg671. Ser729 and Ser750 each carry phosphoserine. Position 753 is a phosphothreonine; by MAPK1 (Thr753).

This sequence belongs to the protein kinase superfamily. TKL Ser/Thr protein kinase family. RAF subfamily. Monomer. Homodimer. Heterodimerizes with RAF1, and the heterodimer possesses a highly increased kinase activity compared to the respective homodimers or monomers. Heterodimerization is mitogen-regulated and enhanced by 14-3-3 proteins. MAPK1/ERK2 activation can induce a negative feedback that promotes the dissociation of the heterodimer by phosphorylating BRAF at Thr-753. Heterodimerizes (via N-terminus) with KSR1 (via N-terminus) or KSR2 (via N-terminus) in a MAP2K1-dependent manner. Interacts with MAP2K1 and MAP2K2. Found in a complex with at least BRAF, HRAS, MAP2K1, MAPK3 and RGS14. Interacts with RIT1. Interacts (via N-terminus) with RGS14 (via RBD domains); the interaction mediates the formation of a ternary complex with RAF1, a ternary complex inhibited by GNAI1. Interacts with DGKH. Interacts with PRMT5. Interacts with KSR2. Interacts with AKAP13, MAP2K1 and KSR1. Identified in a complex with AKAP13, MAP2K1 and KSR1. Interacts with FNIP1 and FNIP2. Zn(2+) serves as cofactor. Post-translationally, phosphorylation at Ser-365 by SGK1 inhibits its activity. Phosphorylation at Thr-753 by MAPK1. Dephosphorylation of Ser-365 by the SHOC2-MRAS-PP1c (SMP) complex consisting of SHOC2, GTP-bound M-Ras/MRAS and the catalytic subunit of protein phosphatase 1 (PPP1CA, PPP1CB or PPP1CC); this relieves inactivation and stimulates kinase activity. In terms of processing, methylation at Arg-671 decreases stability and kinase activity. Ubiquitinated by RNF149; which leads to proteasomal degradation. Polyubiquitinated at Lys-578 in response to EGF. As to expression, brain and testis.

The protein localises to the nucleus. It is found in the cytoplasm. It localises to the cell membrane. It catalyses the reaction L-seryl-[protein] + ATP = O-phospho-L-seryl-[protein] + ADP + H(+). It carries out the reaction L-threonyl-[protein] + ATP = O-phospho-L-threonyl-[protein] + ADP + H(+). Its activity is regulated as follows. In quiescent cells, maintained in an inactive state via an intramolecular interaction between the protein kinase and N-terminal domains. Following mitogen-mediated cell activation, binds via its RGB domain to active HRAS (GTP-bound) which releases the inhibitory intramolecular interaction between the two domains. This allows the MAP2K1-mediated dimerization of KSR1 or KSR2, and BRAF which activates BRAF. Its function is as follows. Protein kinase involved in the transduction of mitogenic signals from the cell membrane to the nucleus. Phosphorylates MAP2K1, and thereby activates the MAP kinase signal transduction pathway. Phosphorylates PFKFB2. May play a role in the postsynaptic responses of hippocampal neurons. The protein is Serine/threonine-protein kinase B-raf of Homo sapiens (Human).